The chain runs to 318 residues: NADH-ubiquinone oxidoreductase chain 1 (318 aa).

Transmembrane regions (helical) follow at residues methionine 1–leucine 21, leucine 71–proline 91, leucine 101–glycine 121, valine 145–leucine 165, histidine 172–alanine 192, phenylalanine 224–isoleucine 244, glutamate 253–isoleucine 273, and leucine 294–isoleucine 314.

The protein belongs to the complex I subunit 1 family.

The protein resides in the mitochondrion inner membrane. The catalysed reaction is a ubiquinone + NADH + 5 H(+)(in) = a ubiquinol + NAD(+) + 4 H(+)(out). Functionally, core subunit of the mitochondrial membrane respiratory chain NADH dehydrogenase (Complex I) that is believed to belong to the minimal assembly required for catalysis. Complex I functions in the transfer of electrons from NADH to the respiratory chain. The immediate electron acceptor for the enzyme is believed to be ubiquinone. The protein is NADH-ubiquinone oxidoreductase chain 1 (MT-ND1) of Varanus rudicollis (Rough-necked monitor lizard).